A 576-amino-acid polypeptide reads, in one-letter code: MLRSFLCRSQNASRNLAVTRISKKKTQTTHSLTSLSRFSYLESSGNASVRNIRFFSTSPPTEENPVSLPADEIPISSAAELTLEESVASALGFSESGDYGGTSVEAVGEDGDSEIVAIENEVYQFDDEKLESVLSLLRSDEESLEFGLNALNVDLHLDFVVRVFESPGISGKNLIRFLKWATQNEEITVTTSLVESLLVAIASDTRRMDAYGLWDLVKEIGEKESCGVLNLEILNELIALFGKLGKSKAAFDVFSKTEEFGFTPNAKTYYLTLEALCKRSFMDWACSVCEKMLKSGVLSEGEQMGNIITWFCKEGKAEEAYSVYELAKTKEKSLPPRFVATLITALCKNDGTITFAQEMLGDLSGEARRRGIKPFSDVIHSLCRMRNVKDAKALLLDMISKGPAPGNAVFNLVVHACSKTGDLDEAKEVLKLMESRGLKPDVYTYTVIISGYAKGGMMDEAQEILAEAKKKHKKLSPVTYHALIRGYCKIEEYDEALKLLNEMDRFGVQPNADEYNKLIQSFCLKALDWEKAEVLFEEMKQKGLHLNAISQGLIRAVKEMESEAKVTEDGNLLAEA.

A mitochondrion-targeting transit peptide spans 1–76 (MLRSFLCRSQ…SLPADEIPIS (76 aa)). 9 PPR repeats span residues 230-264 (NLEI…GFTP), 265-299 (NAKT…GVLS), 300-336 (EGEQ…SLPP), 341-370 (TLIT…ARRR), 371-405 (GIKP…GPAP), 406-440 (GNAV…GLKP), 441-475 (DVYT…HKKL), 476-510 (SPVT…GVQP), and 511-546 (NADE…GLHL).

The protein belongs to the PPR family. P subfamily. In terms of assembly, component of the mitochondrial ribosome small subunit.

It localises to the mitochondrion. This chain is Small ribosomal subunit protein mS80 (rPPR6), found in Arabidopsis thaliana (Mouse-ear cress).